Reading from the N-terminus, the 474-residue chain is Rhodanese-like domain-containing protein 7 (474 aa).

2 disordered regions span residues serine 20–lysine 68 and valine 179–alanine 198. Low complexity predominate over residues glutamine 53–lysine 68. In terms of domain architecture, Rhodanese spans serine 245–serine 368. The Cysteine persulfide intermediate role is filled by cysteine 328. Residues arginine 432 to isoleucine 474 are disordered.

The polypeptide is Rhodanese-like domain-containing protein 7 (STR7) (Arabidopsis thaliana (Mouse-ear cress)).